The following is a 634-amino-acid chain: DNA-directed RNA polymerase subunit gamma (634 aa).

Cys-74, Cys-76, Cys-89, and Cys-92 together coordinate Zn(2+). The Mg(2+) site is built by Asp-471, Asp-473, and Asp-475.

It belongs to the RNA polymerase beta' chain family. RpoC1 subfamily. In terms of assembly, in cyanobacteria the RNAP catalytic core is composed of 2 alpha, 1 beta, 1 beta', 1 gamma and 1 omega subunit. When a sigma factor is associated with the core the holoenzyme is formed, which can initiate transcription. The cofactor is Mg(2+). It depends on Zn(2+) as a cofactor.

It catalyses the reaction RNA(n) + a ribonucleoside 5'-triphosphate = RNA(n+1) + diphosphate. Its function is as follows. DNA-dependent RNA polymerase catalyzes the transcription of DNA into RNA using the four ribonucleoside triphosphates as substrates. The polypeptide is DNA-directed RNA polymerase subunit gamma (Prochlorococcus marinus subsp. pastoris (strain CCMP1986 / NIES-2087 / MED4)).